Reading from the N-terminus, the 156-residue chain is Succinate dehydrogenase assembly factor 2-A, mitochondrial (156 aa).

The N-terminal 24 residues, 1–24, are a transit peptide targeting the mitochondrion; sequence MLRQFLVSTAVRRVVVPSMAQTRC. The interval 35–62 is disordered; it reads TPGEIVDYDDPPHIPVPEYPSRPDEPLE.

This sequence belongs to the SDHAF2 family. As to quaternary structure, interacts with the flavoprotein subunit within the SDH catalytic dimer.

The protein resides in the mitochondrion matrix. In terms of biological role, plays an essential role in the assembly of succinate dehydrogenase (SDH), an enzyme complex (also referred to as respiratory complex II) that is a component of both the tricarboxylic acid (TCA) cycle and the mitochondrial electron transport chain, and which couples the oxidation of succinate to fumarate with the reduction of ubiquinone (coenzyme Q) to ubiquinol. Required for flavinylation (covalent attachment of FAD) of the flavoprotein subunit of the SDH catalytic dimer. This chain is Succinate dehydrogenase assembly factor 2-A, mitochondrial, found in Drosophila ananassae (Fruit fly).